Consider the following 244-residue polypeptide: Protein-L-isoaspartate O-methyltransferase 2 (244 aa).

The active site involves Ser-88.

This sequence belongs to the methyltransferase superfamily. L-isoaspartyl/D-aspartyl protein methyltransferase family.

The protein localises to the cytoplasm. It carries out the reaction [protein]-L-isoaspartate + S-adenosyl-L-methionine = [protein]-L-isoaspartate alpha-methyl ester + S-adenosyl-L-homocysteine. In terms of biological role, catalyzes the methyl esterification of L-isoaspartyl residues in peptides and proteins that result from spontaneous decomposition of normal L-aspartyl and L-asparaginyl residues. It plays a role in the repair and/or degradation of damaged proteins. The sequence is that of Protein-L-isoaspartate O-methyltransferase 2 from Shewanella sediminis (strain HAW-EB3).